Reading from the N-terminus, the 235-residue chain is 2,3,4,5-tetrahydropyridine-2,6-dicarboxylate N-acetyltransferase (235 aa).

It belongs to the transferase hexapeptide repeat family. DapH subfamily.

It carries out the reaction (S)-2,3,4,5-tetrahydrodipicolinate + acetyl-CoA + H2O = L-2-acetamido-6-oxoheptanedioate + CoA. It functions in the pathway amino-acid biosynthesis; L-lysine biosynthesis via DAP pathway; LL-2,6-diaminopimelate from (S)-tetrahydrodipicolinate (acetylase route): step 1/3. Functionally, catalyzes the transfer of an acetyl group from acetyl-CoA to tetrahydrodipicolinate. This Anoxybacillus flavithermus (strain DSM 21510 / WK1) protein is 2,3,4,5-tetrahydropyridine-2,6-dicarboxylate N-acetyltransferase.